The primary structure comprises 443 residues: ATP-dependent protease ATPase subunit HslU (443 aa).

ATP-binding positions include Ile-18, 60–65, Asp-256, Glu-321, and Arg-393; that span reads GVGKTE.

Belongs to the ClpX chaperone family. HslU subfamily. A double ring-shaped homohexamer of HslV is capped on each side by a ring-shaped HslU homohexamer. The assembly of the HslU/HslV complex is dependent on binding of ATP.

The protein localises to the cytoplasm. Its function is as follows. ATPase subunit of a proteasome-like degradation complex; this subunit has chaperone activity. The binding of ATP and its subsequent hydrolysis by HslU are essential for unfolding of protein substrates subsequently hydrolyzed by HslV. HslU recognizes the N-terminal part of its protein substrates and unfolds these before they are guided to HslV for hydrolysis. This chain is ATP-dependent protease ATPase subunit HslU, found in Buchnera aphidicola subsp. Acyrthosiphon pisum (strain 5A).